The following is a 466-amino-acid chain: Asparagine--tRNA ligase (466 aa).

Belongs to the class-II aminoacyl-tRNA synthetase family. In terms of assembly, homodimer.

The protein resides in the cytoplasm. It carries out the reaction tRNA(Asn) + L-asparagine + ATP = L-asparaginyl-tRNA(Asn) + AMP + diphosphate + H(+). The protein is Asparagine--tRNA ligase of Aliivibrio fischeri (strain ATCC 700601 / ES114) (Vibrio fischeri).